Consider the following 373-residue polypeptide: Alanine racemase (373 aa).

Residue Lys37 is the Proton acceptor; specific for D-alanine of the active site. N6-(pyridoxal phosphate)lysine is present on Lys37. Residue Arg135 coordinates substrate. Residue Tyr266 is the Proton acceptor; specific for L-alanine of the active site. Position 313 (Met313) interacts with substrate.

Belongs to the alanine racemase family. Pyridoxal 5'-phosphate is required as a cofactor.

It catalyses the reaction L-alanine = D-alanine. It participates in amino-acid biosynthesis; D-alanine biosynthesis; D-alanine from L-alanine: step 1/1. Its function is as follows. Catalyzes the interconversion of L-alanine and D-alanine. This organism is able to use both L- and D-alanine as a nitrogen source. May also prevent D-alanine from interfering with the use of L-alanine. The protein is Alanine racemase (alr) of Methanococcus maripaludis (strain DSM 14266 / JCM 13030 / NBRC 101832 / S2 / LL).